A 338-amino-acid polypeptide reads, in one-letter code: Glycerol-3-phosphate dehydrogenase [NAD(P)+] (338 aa).

Residues Ser14, Tyr15, His35, and Lys109 each coordinate NADPH. Residues Lys109, Gly138, and Thr140 each coordinate sn-glycerol 3-phosphate. Ala142 is a binding site for NADPH. Sn-glycerol 3-phosphate is bound by residues Lys194, Asp247, Ser257, Arg258, and Asn259. Lys194 serves as the catalytic Proton acceptor. Arg258 contacts NADPH. NADPH-binding residues include Val282 and Glu284.

It belongs to the NAD-dependent glycerol-3-phosphate dehydrogenase family.

Its subcellular location is the cytoplasm. The catalysed reaction is sn-glycerol 3-phosphate + NAD(+) = dihydroxyacetone phosphate + NADH + H(+). The enzyme catalyses sn-glycerol 3-phosphate + NADP(+) = dihydroxyacetone phosphate + NADPH + H(+). The protein operates within membrane lipid metabolism; glycerophospholipid metabolism. Catalyzes the reduction of the glycolytic intermediate dihydroxyacetone phosphate (DHAP) to sn-glycerol 3-phosphate (G3P), the key precursor for phospholipid synthesis. The protein is Glycerol-3-phosphate dehydrogenase [NAD(P)+] of Shewanella sediminis (strain HAW-EB3).